A 241-amino-acid chain; its full sequence is MAMFRNLVASSQHRQHHSHQSLATPSSADSLETQFGCPICLEVYYKPVAIGSCGHTFCGECLQPCLQVSSPLCPLCRMPFDPKKVDKASNVDKQLSSYKAPCRGCSKKVTLAKMRAHISSCPKVQEQMANCPKFVPVLPTSQPIPSNIPNRSTFVCPYCGARNLDQQELVKHCMENHRNDPNKVVCPICSAMPWGDPSYKSANFLQHLLHRHKFSYDTFVDYSIDEEAALQAALALSLSEN.

The interval 8–30 (VASSQHRQHHSHQSLATPSSADS) is disordered. An RING-type zinc finger spans residues 37 to 77 (CPICLEVYYKPVAIGSCGHTFCGECLQPCLQVSSPLCPLCR). Cys102, Cys105, His117, and Cys121 together coordinate Zn(2+). The C2HC RNF-type zinc finger occupies 102 to 121 (CRGCSKKVTLAKMRAHISSC). The 17-residue stretch at 225 to 241 (DEEAALQAALALSLSEN) folds into the UIM domain.

The protein resides in the cytoplasm. It catalyses the reaction S-ubiquitinyl-[E2 ubiquitin-conjugating enzyme]-L-cysteine + [acceptor protein]-L-lysine = [E2 ubiquitin-conjugating enzyme]-L-cysteine + N(6)-ubiquitinyl-[acceptor protein]-L-lysine.. It functions in the pathway protein modification; protein ubiquitination. In terms of biological role, E3 ubiquitin-protein ligase that promotes the ubiquitination of different substrates. The protein is E3 ubiquitin-protein ligase RNF166 (rnf166) of Xenopus laevis (African clawed frog).